A 290-amino-acid polypeptide reads, in one-letter code: Membrane protein insertase YidC 1 (290 aa).

A signal peptide spans methionine 1 to glycine 19. Cysteine 20 carries the N-palmitoyl cysteine lipid modification. The S-diacylglycerol cysteine moiety is linked to residue cysteine 20. Helical transmembrane passes span phenylalanine 56–leucine 76, methionine 134–leucine 154, proline 176–serine 196, methionine 211–leucine 231, and tyrosine 232–serine 252. Residues histidine 270–lysine 290 are disordered. Over residues asparagine 280 to lysine 290 the composition is skewed to polar residues.

It belongs to the OXA1/ALB3/YidC family. Type 2 subfamily.

Its subcellular location is the cell membrane. Required for the insertion and/or proper folding and/or complex formation of integral membrane proteins into the membrane. Involved in integration of membrane proteins that insert both dependently and independently of the Sec translocase complex, as well as at least some lipoproteins. The chain is Membrane protein insertase YidC 1 from Staphylococcus epidermidis (strain ATCC 12228 / FDA PCI 1200).